The sequence spans 167 residues: Shikimate kinase (167 aa).

8-15 (GFMGSGKT) is a binding site for ATP.

The protein belongs to the shikimate kinase family.

The protein resides in the cytoplasm. It carries out the reaction shikimate + ATP = 3-phosphoshikimate + ADP + H(+). Its pathway is metabolic intermediate biosynthesis; chorismate biosynthesis; chorismate from D-erythrose 4-phosphate and phosphoenolpyruvate: step 5/7. This Helicobacter hepaticus (strain ATCC 51449 / 3B1) protein is Shikimate kinase.